Consider the following 440-residue polypeptide: Thymidine phosphorylase (440 aa).

This sequence belongs to the thymidine/pyrimidine-nucleoside phosphorylase family. As to quaternary structure, homodimer.

It carries out the reaction thymidine + phosphate = 2-deoxy-alpha-D-ribose 1-phosphate + thymine. It participates in pyrimidine metabolism; dTMP biosynthesis via salvage pathway; dTMP from thymine: step 1/2. The enzymes which catalyze the reversible phosphorolysis of pyrimidine nucleosides are involved in the degradation of these compounds and in their utilization as carbon and energy sources, or in the rescue of pyrimidine bases for nucleotide synthesis. This chain is Thymidine phosphorylase, found in Salmonella heidelberg (strain SL476).